The following is a 2290-amino-acid chain: MKGHQFKSWIFELREIVREIKNSHYFLDSWTQFNSVGSFIHIFFHQERFRKLLDPRIFSILLLRNSQGSTSNRYFTIKGVVLFVVAALLYRINNRNLVESKNLYLKGLLPIPMNSIGPRNDTSEESFGSSNINRLIVSLLYLTKGKKISESCFRDPKESTWVLPITKKCIMPESNWSSRWWRNWIGKKRDFCCKISNETVAGIDISFKEKDIKYLEFLFVYYMDDPIRKGHDWELFNRLSPSKRRNIINLNSGQLFEILVKDWICYLMFAFREKIPLEVEGFFKQQGAGSTIQSNDIEHVSHLFSRNKWAISLQNCAQFHMWQFHQDLFVSWGKNPHESDFLRKISRENWIWLDNVWLVNKDRFFSKVRNVSSNIQYDSTRSSFVQVTDSSQLNGSSDQFIDPFDSISNEDSEYHYHTLINQREIQQLKERSILWDPSFIQTEGREIESDRFPKYLSGYSSMPRLFTEREKRMNNHLLPEESEEFLGNSTRAIRSFFSDRWSELHLGSNPTERSTRDQKLLKKEQDVSFVPSRRSENQEIVNIFKIITYLQNTVSIHPISSDLGCDMVPKDELDMDSSNKISFLNKNPFFDLFHLFHERKRGGYTLRHDFESEERFQEMADLFTLSITEPDLVYHKGFAFSIDSYGLDQRQFLKEGFNSRDESKKKSLLVLPPIFSEENESFYRRIRKNWVRISCGNYLEDPKRVVFASNNIMEAVNQYRLIRNLIQIQFQYSPYGYIRNVLNRFFLMKRPDRNFEYGIQRDLIGNDTLNHRTIMKDTINQHLSNLKKSQKKWFDPLIFLSRTERSINRDPNAYRYKWSNGSKNFQEHLEHFVSERKSRFQVVFDRLCINQYSIDWSEVIDKKDLSKSLRFFLSKLLRFFLSKLLLFLSKLLLFLSNSLPFFFVSFENIPIHRSEIHIYELKGPNDQLCNQLLESIGLQIVHLKKLKPFLLDDHNTSQKSKFLINGGTISPFLFNKIPKWMIDSFHTRKNRRKSFDNTDSYFSIVSHDQDNWLNPVKPFQRSSLISSFSKANRLRFLNNPHHFCFYCNKRFPFYVEKARLNNSDFTYGQFLTILFLHNKIFSSCGGKKKHAFLERDTISPSSIESQVSNIFISNDFPQSGDERYNLYKSFHFPIRSDPLVRRAIYSIAAISGTPLIEGQRVNFERTYCQTLSDMNLSDSEEKSLHQYLNFNSNMGLIHTPCSEKYLQRKKRSLCLKKCVDKGQMDRTFQRDSAFSTLSKLNLFQTYMPWFFTSTGYKYLNLIFLDTFSDLLRILSSSQKFVSIFHDIMHGLDISWRILQKKLCLPQRNLISEISSKSLHNILLSEEMIHRNNESSLISTHLRSPNVREVLYSILFLLLVAGYIVRTHLLFVSRAYSELQTEFEKIKSLMIPSYMIELRKLLDRYPTSELNSFWLKNLFLVSLEQLGDCLEEIRGSGGNILRGGDPAYGVKSIRSKKKDLKINFIDIISIIPNPINQITFSRNTRHLSHTSKEIYSVIRKRKNVSGDWIDDKIESWVANSDSIDDKEREFLVQFSTLRAEKRIDQILLSLTHSDHLSKNDSGYQMIEQPGTIYLRYLVDIHKKYLMNYEFNTSCLAERRIFLAHYQTITYSQTSCGANSFHFPSHGKPFSLRLALSPSRSILVIGSIGTGRSYLVKYLATNSYVPFITVFLNKFLDNKPKGFFIDDIDIDDSDDIDASNDIDRELDTELELLTMMNALTMDMMSEIDLFYITLQFELAKAMSPCIIWIPNIHDLDVNESNYLALGLLVNSLSRDCERCSTRNILVIASTHIPQKVDPALIAPNKLNTCIKIRRLLIPQQRKHFFTLSYTRGFHLEKKMFHTNGFESITMGSSARDLVALTNEALSISITQKKSIIDTNTIRSALHRQTWDLRSQVRSVQDHGILFYQIGRAVAQNVLISNCPIDPISIYRKKKSCNEGDSYLYKWYFELRTSMKKFTILLYLLSCSAGSVAQDLWSLPGPDEKNRITSYGFIENDSDLVHGLLEVQGALVGSSRTEKDCSQFDNDRVTLLFRSEPRDPLYMMQDGSCSIVDQRFLYEKYESEFEEGEGEGVLDPQQIEEDLFNHIVWAPRIWRPRGFLFDCIERPNELGFPYLAGSFRGKRIIYDEKYELQENDSEFLQSGTMQYQRRDRSSKEQGFFRISQFIWDPADPLFFLFKDQPFVSVFSHREFFADEEMSKGLLTSQTDPPTSIYKRWFIKNTQEKHFELLIQRQRWLRTNSSLSNGFFRSNTRSESYQYLSNLFLSNGTLLDRMTKTLLKKRWLFPDEMKIGFM.

1644 to 1651 (GSIGTGRS) serves as a coordination point for ATP.

It belongs to the Ycf2 family.

It localises to the plastid. The protein resides in the chloroplast stroma. Functionally, probable ATPase of unknown function. Its presence in a non-photosynthetic plant (Epifagus virginiana) and experiments in tobacco indicate that it has an essential function which is probably not related to photosynthesis. The polypeptide is Protein Ycf2 (Nasturtium officinale (Watercress)).